A 291-amino-acid polypeptide reads, in one-letter code: 4-hydroxy-tetrahydrodipicolinate synthase (291 aa).

Thr44 is a binding site for pyruvate. Tyr132 functions as the Proton donor/acceptor in the catalytic mechanism. Lys160 functions as the Schiff-base intermediate with substrate in the catalytic mechanism. Ile202 lines the pyruvate pocket.

Belongs to the DapA family. In terms of assembly, homotetramer; dimer of dimers.

It is found in the cytoplasm. It carries out the reaction L-aspartate 4-semialdehyde + pyruvate = (2S,4S)-4-hydroxy-2,3,4,5-tetrahydrodipicolinate + H2O + H(+). The protein operates within amino-acid biosynthesis; L-lysine biosynthesis via DAP pathway; (S)-tetrahydrodipicolinate from L-aspartate: step 3/4. In terms of biological role, catalyzes the condensation of (S)-aspartate-beta-semialdehyde [(S)-ASA] and pyruvate to 4-hydroxy-tetrahydrodipicolinate (HTPA). The polypeptide is 4-hydroxy-tetrahydrodipicolinate synthase (Sphingopyxis alaskensis (strain DSM 13593 / LMG 18877 / RB2256) (Sphingomonas alaskensis)).